Consider the following 488-residue polypeptide: R3H and coiled-coil domain-containing protein 1 (488 aa).

One can recognise an R3H domain in the interval 16 to 81; the sequence is NDFVHRVQEE…KRRTVICHLD (66 aa). 2 disordered regions span residues 87–180 and 195–322; these read SDGP…GDAE and KSPD…DADH. The segment covering 114–125 has biased composition (low complexity); sequence GAAAGPRGAPAG. At Ser-232 the chain carries Phosphoserine. Positions 244-321 form a coiled coil; that stretch reads SHGMRSLVDQ…EEDEDEADAD (78 aa). The span at 252–265 shows a compositional bias: acidic residues; sequence DQEEEEIEGEEEEK. 2 stretches are compositionally biased toward basic and acidic residues: residues 266 to 280 and 287 to 301; these read VDEK…KERV and TDAQ…GERM. The span at 302 to 319 shows a compositional bias: acidic residues; it reads DEGEDKVDAEEEDEDEAD.

In Mus musculus (Mouse), this protein is R3H and coiled-coil domain-containing protein 1.